The following is a 548-amino-acid chain: Putative malate oxidoreductase [NAD] (548 aa).

Residue Tyr96 is the Proton donor of the active site. The Proton acceptor role is filled by Lys169. Residues Glu240, Asp241, and Asp264 each coordinate a divalent metal cation. NAD(+)-binding positions include 297-300 (AGTA), Asn410, and Asn455.

This sequence belongs to the malic enzymes family. Requires Mg(2+) as cofactor. Mn(2+) is required as a cofactor.

The catalysed reaction is (S)-malate + NAD(+) = pyruvate + CO2 + NADH. It carries out the reaction oxaloacetate + H(+) = pyruvate + CO2. In Mycobacterium tuberculosis (strain CDC 1551 / Oshkosh), this protein is Putative malate oxidoreductase [NAD] (mez).